The primary structure comprises 243 residues: 1-(5-phosphoribosyl)-5-[(5-phosphoribosylamino)methylideneamino] imidazole-4-carboxamide isomerase (243 aa).

Catalysis depends on Asp10, which acts as the Proton acceptor. Residue Asp129 is the Proton donor of the active site.

Belongs to the HisA/HisF family.

Its subcellular location is the cytoplasm. The enzyme catalyses 1-(5-phospho-beta-D-ribosyl)-5-[(5-phospho-beta-D-ribosylamino)methylideneamino]imidazole-4-carboxamide = 5-[(5-phospho-1-deoxy-D-ribulos-1-ylimino)methylamino]-1-(5-phospho-beta-D-ribosyl)imidazole-4-carboxamide. The protein operates within amino-acid biosynthesis; L-histidine biosynthesis; L-histidine from 5-phospho-alpha-D-ribose 1-diphosphate: step 4/9. This is 1-(5-phosphoribosyl)-5-[(5-phosphoribosylamino)methylideneamino] imidazole-4-carboxamide isomerase from Nocardia farcinica (strain IFM 10152).